An 85-amino-acid chain; its full sequence is Antibacterial factor-related peptide 1 (85 aa).

A signal peptide spans 1-19 (MLYFCLLLVLLLPNNGVSS).

In terms of tissue distribution, expressed in the pharynx and body wall muscle.

The protein resides in the secreted. This is Antibacterial factor-related peptide 1 from Caenorhabditis elegans.